We begin with the raw amino-acid sequence, 68 residues long: Alpha-conotoxin-like Lt1.2 (68 aa).

Positions 1 to 21 (MGMRMMFIMFMLVVLATTVDT) are cleaved as a signal peptide. Positions 22 to 48 (FTSDRALDAMNAAASNKASRLIALAVR) are excised as a propeptide. Cystine bridges form between cysteine 50-cysteine 56 and cysteine 51-cysteine 64. Positions 52 to 54 (ARA) are lacks the Ser-Xaa-Pro motif that is crucial for potent interaction with nAChR. Glycine 65 is modified (glycine amide).

This sequence belongs to the conotoxin A superfamily. As to expression, expressed by the venom duct.

The protein localises to the secreted. Alpha-conotoxins act on postsynaptic membranes, they bind to the nicotinic acetylcholine receptors (nAChR) and thus inhibit them. Has a distinct nAChR binding mode from other alpha-conotoxins, due to a different three residue motif (Ala-Xaa-Ala instead of the conserved Ser-Xaa-Pro motif). The polypeptide is Alpha-conotoxin-like Lt1.2 (Conus litteratus (Lettered cone)).